We begin with the raw amino-acid sequence, 408 residues long: Argininosuccinate synthase (408 aa).

ATP is bound by residues 11 to 19 and Ala38; that span reads AYSGGLDTS. L-citrulline contacts are provided by Tyr91 and Ser96. Residue Gly121 participates in ATP binding. Thr123, Asn127, and Asp128 together coordinate L-aspartate. Asn127 contributes to the L-citrulline binding site. Arg131, Ser182, Ser191, Glu267, and Tyr279 together coordinate L-citrulline.

Belongs to the argininosuccinate synthase family. Type 1 subfamily. In terms of assembly, homotetramer.

Its subcellular location is the cytoplasm. It catalyses the reaction L-citrulline + L-aspartate + ATP = 2-(N(omega)-L-arginino)succinate + AMP + diphosphate + H(+). It participates in amino-acid biosynthesis; L-arginine biosynthesis; L-arginine from L-ornithine and carbamoyl phosphate: step 2/3. The polypeptide is Argininosuccinate synthase (Zymomonas mobilis subsp. mobilis (strain ATCC 31821 / ZM4 / CP4)).